The sequence spans 187 residues: Elongation factor P (187 aa).

Belongs to the elongation factor P family.

The protein resides in the cytoplasm. It functions in the pathway protein biosynthesis; polypeptide chain elongation. Involved in peptide bond synthesis. Stimulates efficient translation and peptide-bond synthesis on native or reconstituted 70S ribosomes in vitro. Probably functions indirectly by altering the affinity of the ribosome for aminoacyl-tRNA, thus increasing their reactivity as acceptors for peptidyl transferase. The chain is Elongation factor P from Mycobacterium ulcerans (strain Agy99).